A 198-amino-acid polypeptide reads, in one-letter code: Golgi to ER traffic protein 1 (198 aa).

The Lumenal portion of the chain corresponds to Met-1–Ile-6. Residues Leu-7 to Ser-26 form a helical membrane-spanning segment. Over Gln-27 to Ile-110 the chain is Cytoplasmic. Residues Lys-73–Leu-106 adopt a coiled-coil conformation. Residues Ser-111–Phe-131 traverse the membrane as a helical segment. Topologically, residues Tyr-132 to Ser-155 are lumenal. A helical membrane pass occupies residues Ile-156–Leu-172. Residues Glu-173–Lys-198 lie on the Cytoplasmic side of the membrane.

The protein belongs to the WRB/GET1 family. In terms of assembly, component of the Golgi to ER traffic (GET) complex, which is composed of GET1, GET2 and GET3. Within the complex, GET1 and GET2 form a heterotetramer which is stabilized by phosphatidylinositol binding and which binds to the GET3 homodimer.

It is found in the endoplasmic reticulum membrane. It localises to the golgi apparatus membrane. Required for the post-translational delivery of tail-anchored (TA) proteins to the endoplasmic reticulum. Together with GET2, acts as a membrane receptor for soluble GET3, which recognizes and selectively binds the transmembrane domain of TA proteins in the cytosol. The GET complex cooperates with the HDEL receptor ERD2 to mediate the ATP-dependent retrieval of resident ER proteins that contain a C-terminal H-D-E-L retention signal from the Golgi to the ER. The polypeptide is Golgi to ER traffic protein 1 (Komagataella phaffii (strain GS115 / ATCC 20864) (Yeast)).